Consider the following 423-residue polypeptide: GTPase HflX (423 aa).

The 165-residue stretch at 202 to 366 folds into the Hflx-type G domain; it reads PAAAIVGYTN…LLETILRNQK (165 aa). Residues 208–215, 233–237, 255–258, 321–324, and 344–346 contribute to the GTP site; these read GYTNAGKS, FATLD, DTVG, NKID, and SAK. Residues Ser-215 and Thr-235 each contribute to the Mg(2+) site.

This sequence belongs to the TRAFAC class OBG-HflX-like GTPase superfamily. HflX GTPase family. Monomer. Associates with the 50S ribosomal subunit. Requires Mg(2+) as cofactor.

It localises to the cytoplasm. GTPase that associates with the 50S ribosomal subunit and may have a role during protein synthesis or ribosome biogenesis. The protein is GTPase HflX of Lacrimispora saccharolytica (strain ATCC 35040 / DSM 2544 / NRCC 2533 / WM1) (Clostridium saccharolyticum).